A 302-amino-acid polypeptide reads, in one-letter code: Ribosomal RNA small subunit methyltransferase A (302 aa).

Residues His-15, Leu-17, Gly-42, Glu-64, Asp-89, and Asn-109 each coordinate S-adenosyl-L-methionine. The tract at residues 275–302 (DAASADGHDHGDGSGQGESSPGGARDQI) is disordered.

The protein belongs to the class I-like SAM-binding methyltransferase superfamily. rRNA adenine N(6)-methyltransferase family. RsmA subfamily.

The protein localises to the cytoplasm. The enzyme catalyses adenosine(1518)/adenosine(1519) in 16S rRNA + 4 S-adenosyl-L-methionine = N(6)-dimethyladenosine(1518)/N(6)-dimethyladenosine(1519) in 16S rRNA + 4 S-adenosyl-L-homocysteine + 4 H(+). Functionally, specifically dimethylates two adjacent adenosines (A1518 and A1519) in the loop of a conserved hairpin near the 3'-end of 16S rRNA in the 30S particle. May play a critical role in biogenesis of 30S subunits. This chain is Ribosomal RNA small subunit methyltransferase A, found in Parasynechococcus marenigrum (strain WH8102).